Reading from the N-terminus, the 73-residue chain is NADH dehydrogenase [ubiquinone] 1 beta subcomplex subunit 3-B (73 aa).

Residues 31–48 (ALPGLGIGVAAFCVYLVG) form a helical membrane-spanning segment.

It belongs to the complex I NDUFB3 subunit family. Complex I is composed of at least 49 different subunits.

It localises to the mitochondrion inner membrane. In terms of biological role, accessory subunit of the mitochondrial membrane respiratory chain NADH dehydrogenase (Complex I), that is believed not to be involved in catalysis. Complex I functions in the transfer of electrons from NADH to the respiratory chain. The immediate electron acceptor for the enzyme is believed to be ubiquinone. In Arabidopsis thaliana (Mouse-ear cress), this protein is NADH dehydrogenase [ubiquinone] 1 beta subcomplex subunit 3-B.